Here is a 146-residue protein sequence, read N- to C-terminus: Large ribosomal subunit protein bL17 (146 aa).

A compositionally biased stretch (low complexity) spans 124 to 134 (EASRATRAAAS). Positions 124–146 (EASRATRAAASKKAEEEAASEAE) are disordered.

It belongs to the bacterial ribosomal protein bL17 family. As to quaternary structure, part of the 50S ribosomal subunit. Contacts protein L32.

In Corynebacterium kroppenstedtii (strain DSM 44385 / JCM 11950 / CIP 105744 / CCUG 35717), this protein is Large ribosomal subunit protein bL17.